A 465-amino-acid chain; its full sequence is ATP synthase subunit beta (465 aa).

Residue 149–156 (GGAGVGKT) coordinates ATP.

This sequence belongs to the ATPase alpha/beta chains family. As to quaternary structure, F-type ATPases have 2 components, CF(1) - the catalytic core - and CF(0) - the membrane proton channel. CF(1) has five subunits: alpha(3), beta(3), gamma(1), delta(1), epsilon(1). CF(0) has three main subunits: a(1), b(2) and c(9-12). The alpha and beta chains form an alternating ring which encloses part of the gamma chain. CF(1) is attached to CF(0) by a central stalk formed by the gamma and epsilon chains, while a peripheral stalk is formed by the delta and b chains.

It localises to the cell inner membrane. The catalysed reaction is ATP + H2O + 4 H(+)(in) = ADP + phosphate + 5 H(+)(out). In terms of biological role, produces ATP from ADP in the presence of a proton gradient across the membrane. The catalytic sites are hosted primarily by the beta subunits. This chain is ATP synthase subunit beta, found in Dictyoglomus turgidum (strain DSM 6724 / Z-1310).